We begin with the raw amino-acid sequence, 376 residues long: 26S proteasome non-ATPase regulatory subunit 13 (376 aa).

The PCI domain occupies 171 to 338; that stretch reads SYYKDALRFL…KRVHMTWVQP (168 aa). K298 carries the N6-acetyllysine modification.

This sequence belongs to the proteasome subunit S11 family. As to quaternary structure, component of the 19S proteasome regulatory particle complex. The 26S proteasome consists of a 20S core particle (CP) and two 19S regulatory subunits (RP). The regulatory particle is made of a lid composed of 9 subunits including PSMD13, a base containing 6 ATPases and few additional components.

In terms of biological role, component of the 26S proteasome, a multiprotein complex involved in the ATP-dependent degradation of ubiquitinated proteins. This complex plays a key role in the maintenance of protein homeostasis by removing misfolded or damaged proteins, which could impair cellular functions, and by removing proteins whose functions are no longer required. Therefore, the proteasome participates in numerous cellular processes, including cell cycle progression, apoptosis, or DNA damage repair. The sequence is that of 26S proteasome non-ATPase regulatory subunit 13 from Rattus norvegicus (Rat).